The following is a 436-amino-acid chain: Mannitol-binding protein (436 aa).

The N-terminal stretch at 1–22 (MNDSIKACLAAACLALPLLAQG) is a signal peptide.

The protein belongs to the bacterial solute-binding protein 1 family.

The protein resides in the periplasm. In terms of biological role, binds mannitol with high affinity. The protein is Mannitol-binding protein of Pseudomonas aeruginosa (strain ATCC 15692 / DSM 22644 / CIP 104116 / JCM 14847 / LMG 12228 / 1C / PRS 101 / PAO1).